A 227-amino-acid chain; its full sequence is ATP-dependent dethiobiotin synthetase BioD (227 aa).

13 to 18 (DVGKTV) serves as a coordination point for ATP. T17 provides a ligand contact to Mg(2+). Residue K38 is part of the active site. Residues D55, 116-119 (EGAG), 176-177 (NR), and 205-207 (PYI) each bind ATP. The Mg(2+) site is built by D55 and E116.

Belongs to the dethiobiotin synthetase family. In terms of assembly, homodimer. Mg(2+) serves as cofactor.

The protein resides in the cytoplasm. It carries out the reaction (7R,8S)-7,8-diammoniononanoate + CO2 + ATP = (4R,5S)-dethiobiotin + ADP + phosphate + 3 H(+). Its pathway is cofactor biosynthesis; biotin biosynthesis; biotin from 7,8-diaminononanoate: step 1/2. Catalyzes a mechanistically unusual reaction, the ATP-dependent insertion of CO2 between the N7 and N8 nitrogen atoms of 7,8-diaminopelargonic acid (DAPA, also called 7,8-diammoniononanoate) to form a ureido ring. The chain is ATP-dependent dethiobiotin synthetase BioD from Vibrio vulnificus (strain CMCP6).